We begin with the raw amino-acid sequence, 233 residues long: Ribose-5-phosphate isomerase A (233 aa).

Residues 28-31 (TGST), 83-86 (DGAD), and 96-99 (KGGG) each bind substrate. Glu105 functions as the Proton acceptor in the catalytic mechanism. Lys123 lines the substrate pocket.

The protein belongs to the ribose 5-phosphate isomerase family. In terms of assembly, homodimer.

The enzyme catalyses aldehydo-D-ribose 5-phosphate = D-ribulose 5-phosphate. It participates in carbohydrate degradation; pentose phosphate pathway; D-ribose 5-phosphate from D-ribulose 5-phosphate (non-oxidative stage): step 1/1. In terms of biological role, catalyzes the reversible conversion of ribose-5-phosphate to ribulose 5-phosphate. The chain is Ribose-5-phosphate isomerase A from Rhizobium rhizogenes (strain K84 / ATCC BAA-868) (Agrobacterium radiobacter).